Here is a 135-residue protein sequence, read N- to C-terminus: Single-stranded DNA-binding protein RIM1, mitochondrial (135 aa).

The N-terminal 17 residues, 1–17, are a transit peptide targeting the mitochondrion; sequence MFLRTQARFFHATTKKM. Residues 19-117 enclose the SSB domain; that stretch reads FSKMSIVGRI…LVQKDINLLK (99 aa).

In terms of assembly, homotetramer. Interacts with PIF1.

The protein localises to the mitochondrion. This protein binds preferentially and cooperatively to single-stranded DNA (ssDNS). Involved in mitochondrial DNA replication. Stimulates PIF1 helicase activity. The polypeptide is Single-stranded DNA-binding protein RIM1, mitochondrial (RIM1) (Saccharomyces cerevisiae (strain ATCC 204508 / S288c) (Baker's yeast)).